Here is a 1086-residue protein sequence, read N- to C-terminus: MTNTKYYPDVSANVDFAAIEREILKFWQNNNIFQKSIDHRDGESEFIFYDGPPFANGLPHYGHLLTGFIKDVYARYQTVKGKKVERRFGWDCHGLPAEMQSEKELGISGRLAITNFGIEKFNNHCRASVMQYASEWKQYVTRQARWVAFDNAYKTMDKNFMESVLWAFKELYNKGLLYESMRVMPYSWACETPLSNFETRLDNSYRERTDKAITVSFMLNDITLFNSMISQKLGMTGGDNFKEYRILAWTTTPWTLPANLALAVGSDIDYALVNKNDVCYIIAASSVAKYAKELGLSGKENFEIIKGLKLQGLSYKPLFNYFENHPNSFKIFASNFVVEGEGTGIVHMAPGFGEDDQILCESKGIELVCPVDNSGKFTKEIPDLEGVQVFDANDKIIIKLKEQGNWIKTEQYIHNYPHCWRTDTPLIYKAVPSWYVRVTQFKDRMVELNQQINWIPHNVKDNLFGKWLENARDWSISRNRFWGTPLPVWKSDDPKYPRIDVYGSIEEIEQDFGVKINDLHRPFIDELTRTNPDDPTGKSIMRRIDDVFDCWFESGSMPYGQAHYPFENKKWFVEHFPADFIVEYSSQTRGWFYTLIVLSTALFDRPPFLNCICHGVILDATGQKLSKRLNNYADPLELFDRYGSDALRVTMLSSNVVKGQELLIDKDGKMIFDTLRLFIKPIWNAYHFFTIYANADALKGTLNFTSQNVLDIYILSKLKIAVNKIEESLDNFDTQTAYHAVSEFFEVLNNWYIRRSRARFWKKEKDTDKQNAYNTLYSCLETMTIAMSALVPMISEAIYQGLHNTAITQLNCLLLEGKHVVQNPMSGTQDYNTSVHLCNYPTLSDFEINHELVSTMDNVLDICSNSLFIRSTKNIRVRQPLACITIISKHNNNLKDFEDLIKDEINVKTVIYRDDLENYAHKKLSLNFAILGKRLPHKMKAIIDASKKGEWETSTLGLVICGEILNSNEYKLVLEPHSHIKGTANFENNSSLLILDLELTSELIEEGYARDIIRFIQHARKEADFSITDKILIEIISEFDLSKIIENYGDFIKEQTLGEFAKNFMPDYVSKVALENNLIQLKVKRL.

The 'HIGH' region signature appears at 53–63 (PFANGLPHYGH). Positions 624–628 (KLSKR) match the 'KMSKS' region motif. ATP is bound at residue Lys-627.

It belongs to the class-I aminoacyl-tRNA synthetase family. IleS type 2 subfamily. As to quaternary structure, monomer. The cofactor is Zn(2+).

It localises to the cytoplasm. The catalysed reaction is tRNA(Ile) + L-isoleucine + ATP = L-isoleucyl-tRNA(Ile) + AMP + diphosphate. Catalyzes the attachment of isoleucine to tRNA(Ile). As IleRS can inadvertently accommodate and process structurally similar amino acids such as valine, to avoid such errors it has two additional distinct tRNA(Ile)-dependent editing activities. One activity is designated as 'pretransfer' editing and involves the hydrolysis of activated Val-AMP. The other activity is designated 'posttransfer' editing and involves deacylation of mischarged Val-tRNA(Ile). This is Isoleucine--tRNA ligase from Rickettsia typhi (strain ATCC VR-144 / Wilmington).